Reading from the N-terminus, the 615-residue chain is Increased rDNA silencing protein 4 (615 aa).

Disordered stretches follow at residues 38–135, 152–260, 277–304, and 323–445; these read SNEV…SSHS, LLGI…NRSQ, PSIA…NYSS, and KPKH…NEDK. A compositionally biased stretch (polar residues) spans 50-65; sequence VSRNPQTRLSEPSLQK. Low complexity-rich tracts occupy residues 121–135 and 157–168; these read HSQS…SSHS and SRSSSRNGSNES. Residue Ser-180 is modified to Phosphoserine. The span at 184–198 shows a compositional bias: low complexity; that stretch reads LLTSFSSGRRLSSSS. Residues 248–260 are compositionally biased toward polar residues; that stretch reads NPDTSDVISNRSQ. Low complexity predominate over residues 281 to 290; sequence SSNTTTTTSN. A compositionally biased stretch (basic and acidic residues) spans 365 to 377; sequence ENDHASSLHEGNL. Positions 389 to 402 are enriched in acidic residues; that stretch reads DVYDDTDSDSESDQ. Residues 409–438 show a composition bias toward basic residues; it reads KPRKRDRIKRKIRNSANKTAHHRPIHRTRD. The region spanning 460–571 is the EH domain; sequence ERKRYESMWV…QCVWDSVDRY (112 aa).

The protein belongs to the IRS4 family. As to quaternary structure, interacts with INP51.

With TAX4, acts as a positive regulator of INP51 activity and phosphatidylinositol 4,5-bisphosphate turnover. Negatively regulates signaling through the cell integrity pathway, including the MAP kinase SLT2. Also seems to be involved in rDNA silencing. This Saccharomyces cerevisiae (strain YJM789) (Baker's yeast) protein is Increased rDNA silencing protein 4 (IRS4).